The sequence spans 127 residues: Large ribosomal subunit protein bL17 (127 aa).

It belongs to the bacterial ribosomal protein bL17 family. In terms of assembly, part of the 50S ribosomal subunit. Contacts protein L32.

The polypeptide is Large ribosomal subunit protein bL17 (Chromohalobacter salexigens (strain ATCC BAA-138 / DSM 3043 / CIP 106854 / NCIMB 13768 / 1H11)).